Reading from the N-terminus, the 379-residue chain is Caffeyl-CoA reductase-Etf complex subunit CarC (379 aa).

FAD is bound by residues phenylalanine 122 to serine 131 and phenylalanine 155 to threonine 157. Serine 131 is a binding site for substrate. Residue aspartate 239–arginine 242 coordinates substrate. Residues arginine 267, glutamine 278, and glutamine 335–glycine 339 contribute to the FAD site. The Proton acceptor role is filled by glutamate 362. Glycine 363 contacts substrate. Residue threonine 364–glutamine 366 coordinates FAD.

It belongs to the acyl-CoA dehydrogenase family. Part of the homotrimeric caffeyl-CoA reductase-Etf complex composed of (R)-2-hydroxyisocaproyl-CoA dehydratase CarC, and the electron transfer flavoprotein (ETF) alpha (CarE) and beta (CarD) subunits. FAD is required as a cofactor.

The protein resides in the cytoplasm. It carries out the reaction hydrocaffeoyl-CoA + 2 reduced [2Fe-2S]-[ferredoxin] + 2 NAD(+) = (E)-caffeoyl-CoA + 2 oxidized [2Fe-2S]-[ferredoxin] + 2 NADH. Its function is as follows. The Caffeyl-CoA reductase-Etf complex catalyzes the reduction of caffeyl-CoA to yield hydrocaffeyl-CoA. It couples the endergonic ferredoxin reduction with NADH as reductant to the exergonic reduction of caffeoyl-CoA with the same reductant. It uses the mechanism of electron bifurcation to overcome the steep energy barrier in ferredoxin reduction. Also reduces 4-coumaroyl-CoA and feruloyl-CoA. The protein is Caffeyl-CoA reductase-Etf complex subunit CarC of Acetobacterium woodii (strain ATCC 29683 / DSM 1030 / JCM 2381 / KCTC 1655 / WB1).